The sequence spans 445 residues: Trigger factor (445 aa).

A PPIase FKBP-type domain is found at 171–256 (NDIVIIDFKG…VHVVNEVETP (86 aa)).

This sequence belongs to the FKBP-type PPIase family. Tig subfamily.

The protein localises to the cytoplasm. The enzyme catalyses [protein]-peptidylproline (omega=180) = [protein]-peptidylproline (omega=0). In terms of biological role, involved in protein export. Acts as a chaperone by maintaining the newly synthesized protein in an open conformation. Functions as a peptidyl-prolyl cis-trans isomerase. The polypeptide is Trigger factor (Malacoplasma penetrans (strain HF-2) (Mycoplasma penetrans)).